A 182-amino-acid chain; its full sequence is Large ribosomal subunit protein eL15 (182 aa).

It belongs to the eukaryotic ribosomal protein eL15 family.

This Methanothermobacter thermautotrophicus (strain ATCC 29096 / DSM 1053 / JCM 10044 / NBRC 100330 / Delta H) (Methanobacterium thermoautotrophicum) protein is Large ribosomal subunit protein eL15 (rpl15e).